The sequence spans 259 residues: ATP synthase subunit a 1 (259 aa).

5 consecutive transmembrane segments (helical) span residues 30-50 (TLHVDTLFFSVFLGAVFLFFF), 90-110 (LIAPLALSIFAWVFLMNAMDL), 135-155 (DLNATFGMSISVFFLIIFYSL), 209-229 (LIFILIALLPWWVQPALSFPW), and 230-250 (AVFHILIITLQAFIFMVLTIV).

The protein belongs to the ATPase A chain family. In terms of assembly, F-type ATPases have 2 components, CF(1) - the catalytic core - and CF(0) - the membrane proton channel. CF(1) has five subunits: alpha(3), beta(3), gamma(1), delta(1), epsilon(1). CF(0) has three main subunits: a(1), b(2) and c(9-12). The alpha and beta chains form an alternating ring which encloses part of the gamma chain. CF(1) is attached to CF(0) by a central stalk formed by the gamma and epsilon chains, while a peripheral stalk is formed by the delta and b chains.

It is found in the cell inner membrane. In terms of biological role, key component of the proton channel; it plays a direct role in the translocation of protons across the membrane. In Methylococcus capsulatus (strain ATCC 33009 / NCIMB 11132 / Bath), this protein is ATP synthase subunit a 1.